We begin with the raw amino-acid sequence, 124 residues long: Ribosome-binding factor A (124 aa).

The protein belongs to the RbfA family. As to quaternary structure, monomer. Binds 30S ribosomal subunits, but not 50S ribosomal subunits or 70S ribosomes.

Its subcellular location is the cytoplasm. Functionally, one of several proteins that assist in the late maturation steps of the functional core of the 30S ribosomal subunit. Associates with free 30S ribosomal subunits (but not with 30S subunits that are part of 70S ribosomes or polysomes). Required for efficient processing of 16S rRNA. May interact with the 5'-terminal helix region of 16S rRNA. This is Ribosome-binding factor A from Thiobacillus denitrificans (strain ATCC 25259 / T1).